The sequence spans 169 residues: Lipoprotein signal peptidase (169 aa).

The next 4 helical transmembrane spans lie at 4–24 (PICS…ILDI), 29–49 (WVMA…FNLT), 70–90 (WFFA…MYRS), and 101–121 (YALI…HGAV). Catalysis depends on residues Asp-123 and Asp-141. The helical transmembrane segment at 137–157 (FNLADVAISIGAVLVIFEGFL) threads the bilayer.

The protein belongs to the peptidase A8 family.

The protein localises to the cell inner membrane. It carries out the reaction Release of signal peptides from bacterial membrane prolipoproteins. Hydrolyzes -Xaa-Yaa-Zaa-|-(S,diacylglyceryl)Cys-, in which Xaa is hydrophobic (preferably Leu), and Yaa (Ala or Ser) and Zaa (Gly or Ala) have small, neutral side chains.. It functions in the pathway protein modification; lipoprotein biosynthesis (signal peptide cleavage). This protein specifically catalyzes the removal of signal peptides from prolipoproteins. The sequence is that of Lipoprotein signal peptidase from Yersinia pseudotuberculosis serotype O:1b (strain IP 31758).